We begin with the raw amino-acid sequence, 288 residues long: Pirin-like protein CC_3178 (288 aa).

It belongs to the pirin family.

The protein is Pirin-like protein CC_3178 of Caulobacter vibrioides (strain ATCC 19089 / CIP 103742 / CB 15) (Caulobacter crescentus).